We begin with the raw amino-acid sequence, 251 residues long: Pyrroloquinoline-quinone synthase (251 aa).

This sequence belongs to the PqqC family.

The enzyme catalyses 6-(2-amino-2-carboxyethyl)-7,8-dioxo-1,2,3,4,7,8-hexahydroquinoline-2,4-dicarboxylate + 3 O2 = pyrroloquinoline quinone + 2 H2O2 + 2 H2O + H(+). It participates in cofactor biosynthesis; pyrroloquinoline quinone biosynthesis. Ring cyclization and eight-electron oxidation of 3a-(2-amino-2-carboxyethyl)-4,5-dioxo-4,5,6,7,8,9-hexahydroquinoline-7,9-dicarboxylic-acid to PQQ. In Pseudomonas entomophila (strain L48), this protein is Pyrroloquinoline-quinone synthase.